The sequence spans 488 residues: Glutamyl-tRNA(Gln) amidotransferase subunit A (488 aa).

Catalysis depends on charge relay system residues Lys-77 and Ser-152. Ser-176 (acyl-ester intermediate) is an active-site residue.

Belongs to the amidase family. GatA subfamily. As to quaternary structure, heterotrimer of A, B and C subunits.

It catalyses the reaction L-glutamyl-tRNA(Gln) + L-glutamine + ATP + H2O = L-glutaminyl-tRNA(Gln) + L-glutamate + ADP + phosphate + H(+). Functionally, allows the formation of correctly charged Gln-tRNA(Gln) through the transamidation of misacylated Glu-tRNA(Gln) in organisms which lack glutaminyl-tRNA synthetase. The reaction takes place in the presence of glutamine and ATP through an activated gamma-phospho-Glu-tRNA(Gln). This Streptococcus thermophilus (strain CNRZ 1066) protein is Glutamyl-tRNA(Gln) amidotransferase subunit A.